Consider the following 102-residue polypeptide: NADH-quinone oxidoreductase subunit K (102 aa).

Transmembrane regions (helical) follow at residues 5–25 (LGHFLSLGAMLFALSVIGIFL), 31–51 (IVLLMAIELMLLAVNTNFVAF), and 62–82 (IFVFFILTVAAAESAIGLAIL).

It belongs to the complex I subunit 4L family. As to quaternary structure, NDH-1 is composed of 14 different subunits. Subunits NuoA, H, J, K, L, M, N constitute the membrane sector of the complex.

It localises to the cell inner membrane. It catalyses the reaction a quinone + NADH + 5 H(+)(in) = a quinol + NAD(+) + 4 H(+)(out). In terms of biological role, NDH-1 shuttles electrons from NADH, via FMN and iron-sulfur (Fe-S) centers, to quinones in the respiratory chain. The immediate electron acceptor for the enzyme in this species is believed to be ubiquinone. Couples the redox reaction to proton translocation (for every two electrons transferred, four hydrogen ions are translocated across the cytoplasmic membrane), and thus conserves the redox energy in a proton gradient. In Albidiferax ferrireducens (strain ATCC BAA-621 / DSM 15236 / T118) (Rhodoferax ferrireducens), this protein is NADH-quinone oxidoreductase subunit K.